Here is a 152-residue protein sequence, read N- to C-terminus: Large ribosomal subunit protein uL24 (152 aa).

The interval valine 128 to lysine 152 is disordered.

The protein belongs to the universal ribosomal protein uL24 family. As to quaternary structure, part of the 50S ribosomal subunit.

Its function is as follows. One of two assembly initiator proteins, it binds directly to the 5'-end of the 23S rRNA, where it nucleates assembly of the 50S subunit. Located at the polypeptide exit tunnel on the outside of the subunit. The sequence is that of Large ribosomal subunit protein uL24 from Staphylothermus marinus (strain ATCC 43588 / DSM 3639 / JCM 9404 / F1).